The primary structure comprises 32 residues: Fibrinolytic enzyme (32 aa).

The N-terminus is blocked.

Inhibited by phenylmethanesulfonyl fluoride (PMSF). Not inhibited by EDTA, EGTA, beta-mercaptoethanol, indoacetamide, benzamidine, aprotinin, pepstatin A and trypsin inhibitor. In terms of biological role, plasmin-like serine protease. Has fibrinolytic and fibrinogenolytic but not plasminogenolytic activity. Cleaves after Arg and Lys residues. This is Fibrinolytic enzyme from Hediste japonica (Polychaete worm).